A 218-amino-acid polypeptide reads, in one-letter code: 1-Cys peroxiredoxin (218 aa).

The 161-residue stretch at 4 to 164 (LTIGDTIPDL…VLRVVESLQK (161 aa)) folds into the Thioredoxin domain. Cys46 functions as the Cysteine sulfenic acid (-SOH) intermediate in the catalytic mechanism. The short motif at 194–217 (KEMFPQGFKTADLPSKKEYLRFTN) is the Bipartite nuclear localization signal element.

Belongs to the peroxiredoxin family. Prx6 subfamily.

The protein resides in the nucleus. It localises to the cytoplasm. It carries out the reaction a hydroperoxide + [thioredoxin]-dithiol = an alcohol + [thioredoxin]-disulfide + H2O. Thiol-specific peroxidase that catalyzes the reduction of hydrogen peroxide and organic hydroperoxides to water and alcohols, respectively. Seems to contribute to the inhibition of germination during stress. This is 1-Cys peroxiredoxin from Medicago truncatula (Barrel medic).